Here is a 598-residue protein sequence, read N- to C-terminus: Elongation factor 4 (598 aa).

The region spanning 3–185 is the tr-type G domain; sequence QHIRNFSIIA…MIVAQIPPPE (183 aa). Residues 15-20 and 132-135 each bind GTP; these read DHGKST and NKID.

This sequence belongs to the TRAFAC class translation factor GTPase superfamily. Classic translation factor GTPase family. LepA subfamily.

The protein localises to the cell inner membrane. It carries out the reaction GTP + H2O = GDP + phosphate + H(+). Functionally, required for accurate and efficient protein synthesis under certain stress conditions. May act as a fidelity factor of the translation reaction, by catalyzing a one-codon backward translocation of tRNAs on improperly translocated ribosomes. Back-translocation proceeds from a post-translocation (POST) complex to a pre-translocation (PRE) complex, thus giving elongation factor G a second chance to translocate the tRNAs correctly. Binds to ribosomes in a GTP-dependent manner. The sequence is that of Elongation factor 4 from Nitrosomonas europaea (strain ATCC 19718 / CIP 103999 / KCTC 2705 / NBRC 14298).